The following is a 219-amino-acid chain: Protein DMP5 (219 aa).

The interval 1-24 is disordered; sequence MSALRLRNANTPAPELDELSDQTP. The next 4 membrane-spanning stretches (helical) occupy residues 51 to 71, 82 to 102, 142 to 162, and 182 to 202; these read LSNL…PVFT, FLTA…SFTD, MRFV…AVAL, and VLDI…MVFP.

Belongs to the plant DMP1 protein family.

It is found in the endoplasmic reticulum membrane. In terms of biological role, involved in membrane remodeling. The polypeptide is Protein DMP5 (Arabidopsis thaliana (Mouse-ear cress)).